Consider the following 60-residue polypeptide: LKCKKLVPLFSKTCPAGKNLCYKMFMVAAPHVPVKRGCIDVCPKSSLLVKYVCCNTDKCN.

4 disulfide bridges follow: Cys3/Cys21, Cys14/Cys38, Cys42/Cys53, and Cys54/Cys59.

Belongs to the three-finger toxin family. Short-chain subfamily. Type IA cytotoxin sub-subfamily. Monomer in solution; Homodimer and oligomer in the presence of negatively charged lipids forming a pore with a size ranging between 20 and 30 Angstroms. In terms of tissue distribution, expressed by the venom gland.

Its subcellular location is the secreted. The protein resides in the target cell membrane. Functionally, this three-finger cytotoxin is a basic protein that interacts and penetrates into the cell membrane, with the tips of all the three loops. Cytotoxins which have a Pro-30 (P-type) interacts with membrane stronger that those which have a 'Ser-28' (S-type). CTII interacts with membrane stronger than CTI. The chain is Cytotoxin 2 from Naja oxiana (Central Asian cobra).